A 137-amino-acid chain; its full sequence is Nucleoside diphosphate kinase (137 aa).

ATP-binding residues include K9, F57, R85, T91, R102, and N112. The active-site Pros-phosphohistidine intermediate is H115.

The protein belongs to the NDK family. In terms of assembly, homotetramer. Requires Mg(2+) as cofactor.

It is found in the cytoplasm. It carries out the reaction a 2'-deoxyribonucleoside 5'-diphosphate + ATP = a 2'-deoxyribonucleoside 5'-triphosphate + ADP. The catalysed reaction is a ribonucleoside 5'-diphosphate + ATP = a ribonucleoside 5'-triphosphate + ADP. Major role in the synthesis of nucleoside triphosphates other than ATP. The ATP gamma phosphate is transferred to the NDP beta phosphate via a ping-pong mechanism, using a phosphorylated active-site intermediate. The polypeptide is Nucleoside diphosphate kinase (Leptospira interrogans serogroup Icterohaemorrhagiae serovar Lai (strain 56601)).